The sequence spans 443 residues: Thymidine phosphorylase (443 aa).

It belongs to the thymidine/pyrimidine-nucleoside phosphorylase family. Homodimer.

The enzyme catalyses thymidine + phosphate = 2-deoxy-alpha-D-ribose 1-phosphate + thymine. It participates in pyrimidine metabolism; dTMP biosynthesis via salvage pathway; dTMP from thymine: step 1/2. Its function is as follows. The enzymes which catalyze the reversible phosphorolysis of pyrimidine nucleosides are involved in the degradation of these compounds and in their utilization as carbon and energy sources, or in the rescue of pyrimidine bases for nucleotide synthesis. The sequence is that of Thymidine phosphorylase from Shewanella baltica (strain OS185).